A 244-amino-acid chain; its full sequence is uncharacterized protein (244 aa).

Over residues 1-11 the composition is skewed to basic residues; it reads MSRRSRSRSRS. Disordered regions lie at residues 1 to 104 and 213 to 244; these read MSRR…TLNE and ARQK…KFGK. Residues 12 to 31 are compositionally biased toward basic and acidic residues; sequence PKRDREERKRREDRDRDRER. A compositionally biased stretch (basic residues) spans 32-46; that stretch reads KRDRKDRERKRRHRS. The segment covering 63–75 has biased composition (basic and acidic residues); it reads FREERRRRERNES. Residues 77–89 show a composition bias toward pro residues; it reads KLPPPPPPPPSDP. The span at 213-223 shows a compositional bias: basic and acidic residues; it reads ARQKSDMKKNE. The segment covering 224 to 234 has biased composition (polar residues); it reads QQAILNKSGNS.

This is an uncharacterized protein from Caenorhabditis elegans.